Consider the following 217-residue polypeptide: Protein OPI10 homolog (217 aa).

Belongs to the OPI10 family.

This is Protein OPI10 homolog from Dictyostelium discoideum (Social amoeba).